The following is a 205-amino-acid chain: Molybdenum cofactor guanylyltransferase (205 aa).

GTP is bound by residues 14-16 (LAG), lysine 27, aspartate 77, and aspartate 107. Residue aspartate 107 participates in Mg(2+) binding.

The protein belongs to the MobA family. Monomer. It depends on Mg(2+) as a cofactor.

It localises to the cytoplasm. It carries out the reaction Mo-molybdopterin + GTP + H(+) = Mo-molybdopterin guanine dinucleotide + diphosphate. In terms of biological role, transfers a GMP moiety from GTP to Mo-molybdopterin (Mo-MPT) cofactor (Moco or molybdenum cofactor) to form Mo-molybdopterin guanine dinucleotide (Mo-MGD) cofactor. In Burkholderia orbicola (strain MC0-3), this protein is Molybdenum cofactor guanylyltransferase.